The chain runs to 235 residues: V-type proton ATPase subunit E2 (235 aa).

The residue at position 1 (methionine 1) is an N-acetylmethionine. Residues 8 to 64 adopt a coiled-coil conformation; that stretch reads KQIQQMVRFIRQEAEEKANEISISAEEEFNIERLQLLESAKRKLRQDYDRKLKQVDI.

The protein belongs to the V-ATPase E subunit family. V-ATPase is a heteromultimeric enzyme composed of a peripheral catalytic V1 complex (components A to H) attached to an integral membrane V0 proton pore complex (components: a, c, c'', d and e).

The protein resides in the vacuole membrane. In terms of biological role, subunit of the peripheral V1 complex of vacuolar ATPase essential for assembly or catalytic function. V-ATPase is responsible for acidifying a variety of intracellular compartments in eukaryotic cells. The protein is V-type proton ATPase subunit E2 (VHA-E2) of Arabidopsis thaliana (Mouse-ear cress).